The following is a 124-amino-acid chain: Small ribosomal subunit protein uS12 (124 aa).

The tract at residues 1–22 (MATINQLVRKPRKRKVAKSDVP) is disordered. 3-methylthioaspartic acid is present on Asp-89. A disordered region spans residues 101 to 124 (TLDTQGVQNRKQGRSKYGAKRPKS). The span at 111-124 (KQGRSKYGAKRPKS) shows a compositional bias: basic residues.

This sequence belongs to the universal ribosomal protein uS12 family. Part of the 30S ribosomal subunit. Contacts proteins S8 and S17. May interact with IF1 in the 30S initiation complex.

With S4 and S5 plays an important role in translational accuracy. Functionally, interacts with and stabilizes bases of the 16S rRNA that are involved in tRNA selection in the A site and with the mRNA backbone. Located at the interface of the 30S and 50S subunits, it traverses the body of the 30S subunit contacting proteins on the other side and probably holding the rRNA structure together. The combined cluster of proteins S8, S12 and S17 appears to hold together the shoulder and platform of the 30S subunit. The sequence is that of Small ribosomal subunit protein uS12 from Marinobacter nauticus (strain ATCC 700491 / DSM 11845 / VT8) (Marinobacter aquaeolei).